The following is a 207-amino-acid chain: Partner of Y14 and mago (207 aa).

2 disordered regions span residues 1–28 and 52–133; these read MSTY…KARR and QRQA…NSIS. The stretch at 64-91 forms a coiled coil; it reads LLAAESKKEREKQERTRAKKQEKESGRQ. The span at 68-90 shows a compositional bias: basic and acidic residues; it reads ESKKEREKQERTRAKKQEKESGR. Residues 123-133 are compositionally biased toward polar residues; it reads PSGSRDINSIS. The stretch at 152 to 184 forms a coiled coil; that stretch reads AKQLKKLRKKIREIEQIESRIQAGEQKKLDKDQ.

The protein belongs to the pym family. Interacts (via N-terminus) with mago and tsu/RBM8A; the interaction is direct. Expression detected in the ovary. In the oocyte expressed in the germarium, nurse cell and follicle cell.

Its subcellular location is the cytoplasm. It is found in the nucleus. Regulator of the exon junction complex (EJC), a multiprotein complex that associates immediately upstream of the exon-exon junction on mRNAs and serves as a positional landmark for the intron exon structure of genes and directs post-transcriptional processes in the cytoplasm such as mRNA export, nonsense-mediated mRNA decay (NMD) or translation. Acts as an EJC disassembly factor by disrupting mature EJC from spliced mRNAs. Required for normal localization of osk mRNA to the posterior pole of the developing oocyte. Does not interact with the small ribosomal unit or components of the translation initiation complex. May not function in cap-dependent translation regulation. The protein is Partner of Y14 and mago of Drosophila melanogaster (Fruit fly).